The following is an 87-amino-acid chain: Small ribosomal subunit protein uS15 (87 aa).

It belongs to the universal ribosomal protein uS15 family. Part of the 30S ribosomal subunit. Forms a bridge to the 50S subunit in the 70S ribosome, contacting the 23S rRNA.

Functionally, one of the primary rRNA binding proteins, it binds directly to 16S rRNA where it helps nucleate assembly of the platform of the 30S subunit by binding and bridging several RNA helices of the 16S rRNA. Forms an intersubunit bridge (bridge B4) with the 23S rRNA of the 50S subunit in the ribosome. The sequence is that of Small ribosomal subunit protein uS15 from Clostridium acetobutylicum (strain ATCC 824 / DSM 792 / JCM 1419 / IAM 19013 / LMG 5710 / NBRC 13948 / NRRL B-527 / VKM B-1787 / 2291 / W).